The sequence spans 256 residues: Expansin-like B1 (256 aa).

The signal sequence occupies residues 1–24 (MAQLLRRHLPVILSLILFLSKATA). Residue Asn-27 is glycosylated (N-linked (GlcNAc...) asparagine). Positions 46-150 (NGACEYGAFG…RRVSCTYPNK (105 aa)) constitute an Expansin-like EG45 domain. The Expansin-like CBD domain maps to 164 to 249 (NYLEFEIWYQ…NWTAGATYDS (86 aa)). N-linked (GlcNAc...) asparagine glycans are attached at residues Asn-189 and Asn-240.

The protein belongs to the expansin family. Expansin-like B subfamily.

The protein localises to the secreted. The polypeptide is Expansin-like B1 (EXLB1) (Oryza sativa subsp. japonica (Rice)).